A 549-amino-acid polypeptide reads, in one-letter code: MLNQKIQNPNPDELMIEVDLCYELDPYELKLDEMIEAEPEPEMIEGLPASDALTPADRYLELFEHVQSAKIFPDSKTFPDCAPKMDPLDILIRYRKVRRHRDFDLRKFVENHFWLPEVYSSEYVSDPQNSLKEHIDQLWPVLTREPQDHIPWSSLLALPQSYIVPGGRFSETYYWDSYFTMLGLAESGREDLLKCMADNFAWMIENYGHIPNGNRTYYLSRSQPPVFALMVELFEEDGVRGARRYLDHLKMEYAFWMDGAESLIPNQAYRHVVRMPDGSLLNRYWDDRDTPRDESWLEDVETAKHSGRPPNEVYRDLRAGAASGWDYSSRWLRDTGRLASIRTTQFIPIDLNAFLFKLESAIANISALKGEKETEALFRQKASARRDAVNRYLWDDENGIYRDYDWRREQLALFSAAAIVPLYVGMANHEQADRLANAVRSRLLTPGGILASEYETGEQWDKPNGWAPLQWMAIQGFKMYGDDLLGDEIARNWLKTVNQFYLEQHKLIEKYHIADGVPREGGGGEYPLQDGFGWTNGVVRRLIGLYGEP.

Substrate is bound by residues Arg-168, 175–176 (WD), Asn-212, 221–223 (RSQ), 292–294 (RDE), and Gly-324. Catalysis depends on proton donor/acceptor residues Asp-326 and Glu-509. Glu-525 serves as a coordination point for substrate.

This sequence belongs to the glycosyl hydrolase 37 family. Monomer.

It is found in the cytoplasm. The catalysed reaction is alpha,alpha-trehalose + H2O = alpha-D-glucose + beta-D-glucose. Its pathway is glycan degradation; trehalose degradation; D-glucose from alpha,alpha-trehalose: step 1/1. In terms of biological role, hydrolyzes trehalose to glucose. Could be involved, in cells returning to low osmolarity conditions, in the utilization of the accumulated cytoplasmic trehalose, which was synthesized in response to high osmolarity. This chain is Cytoplasmic trehalase, found in Escherichia coli O127:H6 (strain E2348/69 / EPEC).